The sequence spans 638 residues: E3 ubiquitin-protein ligase TRIM47 (638 aa).

Position 1 is an N-acetylmethionine (Met1). An RING-type zinc finger spans residues 9 to 58 (CPICLEPLREPVTLPCGHNFCLACLGALWPHRGASGAGGPGGAARCPLCQ). Residue Thr72 is modified to Phosphothreonine. The segment at 79-119 (LRQGSGPGSGPGPAPALAPEPSAPSALPSVPEPSAPCAPEP) is disordered. 2 stretches are compositionally biased toward pro residues: residues 88–100 (GPGP…PEPS) and 108–119 (VPEPSAPCAPEP). The B box-type zinc finger occupies 177–217 (LEESLCPRHLRPLERYCRAERVCLCEACAAQEHRGHELVPL). Residues Cys182, His185, Cys204, and His209 each coordinate Zn(2+). A coiled-coil region spans residues 296-324 (MLGRSQGDLRRQEEQRSRLSRARQNLSQV). 2 disordered regions span residues 300–322 (SQGD…QNLS) and 384–411 (LRGP…LEST). The span at 302-312 (GDLRRQEEQRS) shows a compositional bias: basic and acidic residues. In terms of domain architecture, B30.2/SPRY spans 410–631 (STNLLESEAP…LQIGPLKKSC (222 aa)). Ser461 is modified (phosphoserine). Arg582 bears the Omega-N-methylarginine mark. At Ser588 the chain carries Phosphoserine.

The protein belongs to the TRIM/RBCC family. As to expression, low expression in most tissues. Higher expression in kidney tubular cells. Overexpressed in astrocytoma tumor cells.

The protein localises to the cytoplasm. It is found in the nucleus. The catalysed reaction is S-ubiquitinyl-[E2 ubiquitin-conjugating enzyme]-L-cysteine + [acceptor protein]-L-lysine = [E2 ubiquitin-conjugating enzyme]-L-cysteine + N(6)-ubiquitinyl-[acceptor protein]-L-lysine.. It functions in the pathway protein modification; protein ubiquitination. E3 ubiquitin-protein ligase that mediates the ubiquitination and proteasomal degradation of CYLD. This is E3 ubiquitin-protein ligase TRIM47 from Homo sapiens (Human).